The chain runs to 413 residues: Heparan-sulfate 6-O-sulfotransferase 1-A (413 aa).

At 9–15 (MVERSSK) the chain is on the cytoplasmic side. A helical; Signal-anchor for type II membrane protein membrane pass occupies residues 16–36 (FLFIVVGSVLFMLILYQYVAP). The Lumenal segment spans residues 37-413 (GMMNFGSPHG…DYMNHIINRW (377 aa)). A 3'-phosphoadenylyl sulfate-binding site is contributed by 92–100 (HIQKTGGTT). Residues 122-123 (KK), Arg139, Trp144, and His149 each bind substrate. Residue His149 is the Proton acceptor of the active site. 3'-phosphoadenylyl sulfate-binding residues include Arg183 and Ser191. His195 and Trp202 together coordinate substrate. The N-linked (GlcNAc...) asparagine glycan is linked to Asn262. 315–317 (MQY) lines the 3'-phosphoadenylyl sulfate pocket. Asn318 carries N-linked (GlcNAc...) asparagine glycosylation. 321-322 (RA) lines the 3'-phosphoadenylyl sulfate pocket. An N-linked (GlcNAc...) asparagine glycan is attached at Asn329. The tract at residues 374–401 (PLFPFRRTSSSDSTFRDDAPESEGSRLP) is disordered.

Belongs to the sulfotransferase 6 family. As to expression, during somitogenesis, first expressed in polster and presumptive forebrain. During mid-somitogenesis, expressed in eye, hindbrain and anterior spinal cord. During late somitogenesis, strong expression in eye and hindbrain, decreased levels in midbrain and anterior spinal cord. At 24 hours post-fertilization (hpf), expressed in neural retina and lens, brain and anterior spinal cord. At 36 hpf, retinal expression is confined to the ciliary marginal zone and there is strong expression in tectum, rhombomeres and otic vesicle. At 48 hpf, expressed in retinal ganglion cells and in tectum, rhombomeres and pectoral fin. Not detected in the vasculature during embryogenesis.

The protein resides in the membrane. The enzyme catalyses alpha-D-glucosaminyl-[heparan sulfate](n) + 3'-phosphoadenylyl sulfate = 6-sulfo-alpha-D-glucosaminyl-[heparan sulfate](n) + adenosine 3',5'-bisphosphate + H(+). Functionally, 6-O-sulfation enzyme which catalyzes the transfer of sulfate from 3'-phosphoadenosine 5'-phosphosulfate (PAPS) to position 6 of the N-sulfoglucosamine residue (GlcNS) of heparan sulfate. The sequence is that of Heparan-sulfate 6-O-sulfotransferase 1-A from Danio rerio (Zebrafish).